A 344-amino-acid chain; its full sequence is MNTKTVKSMAGIVLSQISLVALFPLCICYQTHQSTSSVASLSPQFYENSCPNAQAIVQSYVANAYFNDPRMAASILRLHFHDCFVNGCDASVLLDSSGTMESEKRSNANRDSARGFEVIDEIKSALENECPETVSCADLLALVARDSIVICGGPSWEVYLGRRDAREASLIGSMENIPSPESTLQTILTMFNFQGLDLTDLVALLGSHTIGNSRCIGFRQRLYNHTGNNDPDQTLNQDYASMLQQGCPISGNDQNLFNLDYVTPTKFDNYYYKNLVNFRGLLSSDEILFTQSIETMEMVKYYAENEGAFFEQFAKSMVKMGNISPLTGTDGEIRRICRRVNHDV.

An N-terminal signal peptide occupies residues 1-28 (MNTKTVKSMAGIVLSQISLVALFPLCIC). 4 disulfides stabilise this stretch: Cys50/Cys130, Cys83/Cys88, Cys136/Cys337, and Cys215/Cys247. The Proton acceptor role is filled by His81. The Ca(2+) site is built by Asp82, Val85, Gly87, Asp89, and Ser91. Position 178 (Pro178) interacts with substrate. His208 contributes to the heme b binding site. Thr209 contributes to the Ca(2+) binding site. A glycan (N-linked (GlcNAc...) asparagine) is linked at Asn224. Ca(2+)-binding residues include Asp260, Thr263, and Asp268.

This sequence belongs to the peroxidase family. Classical plant (class III) peroxidase subfamily. Heme b is required as a cofactor. The cofactor is Ca(2+).

It localises to the secreted. It catalyses the reaction 2 a phenolic donor + H2O2 = 2 a phenolic radical donor + 2 H2O. In terms of biological role, removal of H(2)O(2), oxidation of toxic reductants, biosynthesis and degradation of lignin, suberization, auxin catabolism, response to environmental stresses such as wounding, pathogen attack and oxidative stress. These functions might be dependent on each isozyme/isoform in each plant tissue. The polypeptide is Peroxidase 36 (PER36) (Arabidopsis thaliana (Mouse-ear cress)).